The primary structure comprises 85 residues: U4-theraphotoxin-Hhn1a (85 aa).

Positions 1 to 22 (MKVTLIAILTCAAALVLHTTAA) are cleaved as a signal peptide. Positions 23 to 48 (EELEAESQLMEVGMPDTELAAVDEER) are excised as a propeptide. 3 disulfides stabilise this stretch: cysteine 52–cysteine 66, cysteine 56–cysteine 77, and cysteine 71–cysteine 82.

This sequence belongs to the neurotoxin 12 (Hwtx-2) family. 02 (Hwtx-2) subfamily. In terms of assembly, monomer. Expressed by the venom gland.

It is found in the secreted. Neurotoxin active on both insects and mammals. This Cyriopagopus hainanus (Chinese bird spider) protein is U4-theraphotoxin-Hhn1a.